Reading from the N-terminus, the 309-residue chain is Probable RNA polymerase II nuclear localization protein SLC7A6OS (309 aa).

Disordered stretches follow at residues 101–134 (GRYR…AGNS) and 233–287 (PEDI…QRMW). Over residues 106–118 (LSSRRSLGTTSSG) the composition is skewed to low complexity. Composition is skewed to acidic residues over residues 233–245 (PEDI…DENS) and 254–263 (PEEESSDGDE). A phosphoserine mark is found at serine 302 and serine 308.

The protein belongs to the IWR1/SLC7A6OS family.

Its subcellular location is the cytoplasm. It is found in the nucleus. Functionally, directs RNA polymerase II nuclear import. This Homo sapiens (Human) protein is Probable RNA polymerase II nuclear localization protein SLC7A6OS (SLC7A6OS).